A 257-amino-acid polypeptide reads, in one-letter code: Dihydroorotate dehydrogenase B (NAD(+)), electron transfer subunit (257 aa).

Positions 2–102 constitute an FAD-binding FR-type domain; sequence IGRERMTVAS…LGPLGNGFPL (101 aa). Residues 53–56, 70–72, and 77–78 contribute to the FAD site; these read RPLS, IYR, and GT. Residues cysteine 221, cysteine 226, cysteine 229, and cysteine 244 each contribute to the [2Fe-2S] cluster site.

Belongs to the PyrK family. In terms of assembly, heterotetramer of 2 PyrK and 2 PyrD type B subunits. Requires [2Fe-2S] cluster as cofactor. The cofactor is FAD.

It functions in the pathway pyrimidine metabolism; UMP biosynthesis via de novo pathway; orotate from (S)-dihydroorotate (NAD(+) route): step 1/1. Its function is as follows. Responsible for channeling the electrons from the oxidation of dihydroorotate from the FMN redox center in the PyrD type B subunit to the ultimate electron acceptor NAD(+). In Bacillus caldolyticus, this protein is Dihydroorotate dehydrogenase B (NAD(+)), electron transfer subunit.